The primary structure comprises 351 residues: MIKTLVVDDSALMRRAIRDMLESADDIEVIGTAKNGKEAVENTNKLKPEVIVMDVNMPIMDGLAAVKAIMKTTPIPIIMFSSLTKKGSIEALEALRLGAIDFITKPSGLQEISKIENELVTKVRNLYNSNVNIIRLLNLKKFKGEVINGNWNCPDQNLGILIGSSTGGPSSLEQIIPRLPGDLPASVFIVQHMPEGNFCSQLAARLDAISELEVKEAENNEKVKIGVAYIAPGGYHMEIRKALDVTRIKIIKGKPMHAVMPSVDVTVESFVKVYGNNSVAIILTGMGVDGASGFKKINESNGATIACSEDTCVVFGMPKAAIEAGAIDVVKPIFEIPEQIVRMIEVKCNGN.

In terms of domain architecture, Response regulatory spans 3–120; the sequence is KTLVVDDSAL…EISKIENELV (118 aa). Position 54 is a 4-aspartylphosphate (Asp-54). The CheB-type methylesterase domain occupies 160 to 347; it reads ILIGSSTGGP…EQIVRMIEVK (188 aa). Catalysis depends on residues Ser-165, His-192, and Asp-289.

The protein belongs to the CheB family. Post-translationally, phosphorylated by CheA. Phosphorylation of the N-terminal regulatory domain activates the methylesterase activity.

It is found in the cytoplasm. The enzyme catalyses [protein]-L-glutamate 5-O-methyl ester + H2O = L-glutamyl-[protein] + methanol + H(+). The catalysed reaction is L-glutaminyl-[protein] + H2O = L-glutamyl-[protein] + NH4(+). Functionally, involved in chemotaxis. Part of a chemotaxis signal transduction system that modulates chemotaxis in response to various stimuli. Catalyzes the demethylation of specific methylglutamate residues introduced into the chemoreceptors (methyl-accepting chemotaxis proteins or MCP) by CheR. Also mediates the irreversible deamidation of specific glutamine residues to glutamic acid. This is Protein-glutamate methylesterase/protein-glutamine glutaminase from Methanococcoides burtonii (strain DSM 6242 / NBRC 107633 / OCM 468 / ACE-M).